Reading from the N-terminus, the 424-residue chain is Histidine--tRNA ligase (424 aa).

Belongs to the class-II aminoacyl-tRNA synthetase family. Homodimer.

The protein localises to the cytoplasm. The catalysed reaction is tRNA(His) + L-histidine + ATP = L-histidyl-tRNA(His) + AMP + diphosphate + H(+). The polypeptide is Histidine--tRNA ligase (Salmonella gallinarum (strain 287/91 / NCTC 13346)).